We begin with the raw amino-acid sequence, 374 residues long: uncharacterized protein (374 aa).

Residues Arg86 to Arg104 are compositionally biased toward low complexity. The segment at Arg86 to Ala109 is disordered. Positions Trp179 to Gly354 constitute a Macro domain.

This is an uncharacterized protein from Mycobacterium tuberculosis (strain CDC 1551 / Oshkosh).